The chain runs to 89 residues: UPF0250 protein CV_3095 (89 aa).

Belongs to the UPF0250 family.

The sequence is that of UPF0250 protein CV_3095 from Chromobacterium violaceum (strain ATCC 12472 / DSM 30191 / JCM 1249 / CCUG 213 / NBRC 12614 / NCIMB 9131 / NCTC 9757 / MK).